The primary structure comprises 635 residues: Chaperone protein HtpG (635 aa).

The a; substrate-binding stretch occupies residues 1–346; that stretch reads MSQTTTNSAS…SADLPLNVSR (346 aa). A b region spans residues 347 to 563; sequence EILQESRDVR…QNELSPHLLR (217 aa). Positions 564 to 635 are c; that stretch reads MLKAAGQEAP…KRLNGLLLKA (72 aa).

This sequence belongs to the heat shock protein 90 family. As to quaternary structure, homodimer.

The protein localises to the cytoplasm. Molecular chaperone. Has ATPase activity. This is Chaperone protein HtpG from Bordetella parapertussis (strain 12822 / ATCC BAA-587 / NCTC 13253).